We begin with the raw amino-acid sequence, 341 residues long: Phenazine O-methyltransferase PhzM (341 aa).

S-adenosyl-L-methionine contacts are provided by residues aspartate 205 and 231-233; that span reads GDF. The active-site Proton acceptor is histidine 251.

The protein belongs to the class I-like SAM-binding methyltransferase superfamily. Cation-independent O-methyltransferase family. As to quaternary structure, homodimer.

It carries out the reaction 1,6-dihydroxyphenazine + S-adenosyl-L-methionine = 1-hydroxy-6-methoxyphenazine + S-adenosyl-L-homocysteine + H(+). The enzyme catalyses 1-hydroxy-6-methoxyphenazine + S-adenosyl-L-methionine = 1,6-dimethoxyphenazine + S-adenosyl-L-homocysteine + H(+). It catalyses the reaction 1-hydroxy-6-methoxyphenazine N(10)-oxide + S-adenosyl-L-methionine = 1,6-dimethoxyphenazine N(5)-oxide + S-adenosyl-L-homocysteine. The catalysed reaction is 1,6-dihydroxyphenazine N(5),N(10)-dioxide + S-adenosyl-L-methionine = 1-hydroxy-6-methoxyphenazine N(5),N(10)-dioxide + S-adenosyl-L-homocysteine. It carries out the reaction 1-hydroxy-6-methoxyphenazine N(5),N(10)-dioxide + S-adenosyl-L-methionine = 1,6-dimethoxyphenazine N(5),N(10)-dioxide + S-adenosyl-L-homocysteine. Functionally, involved in the biosynthesis of phenazine natural products including myxin, an N(5),N(10)-dioxide phenazine antiobiotic, which has antimicrobial activity. O-methyltransferase, which converts iodinin (1,6-dihydroxyphenazine N(5),N(10)-dioxide) to myxin (1-hydroxy-6-methoxyphenazine N(5),N(10)-dioxide). Catalyzes both monomethoxy and dimethoxy formation of phenazine natural compounds. Acts on a wide variety of substrates, catalyzing O-methylation of phenazines with non-, mono- or di-N-oxide. Highest activity with 1,6-dihydroxyphenazine (DHP) as substrate. Less active with monohydroxy-containing and monohydroxy-monomethoxy-containing phenazines. Least active with non-phenazine substrates, such as 8-hydroxyquinoline and 6-hydroxyquinoline. Is not able to convert 1-hydroxyphenazine to 1-hydroxy-N5-methylphenazine (pyocyanine), hence does not function as an N-methyltransferase. This Lysobacter antibioticus protein is Phenazine O-methyltransferase PhzM.